Reading from the N-terminus, the 199-residue chain is Ribosome maturation factor RimM (199 aa).

The region spanning 100-195 is the PRC barrel domain; it reads ADEWYPKDLI…YLTLDPPGGL (96 aa).

It belongs to the RimM family. As to quaternary structure, binds ribosomal protein uS19.

It localises to the cytoplasm. In terms of biological role, an accessory protein needed during the final step in the assembly of 30S ribosomal subunit, possibly for assembly of the head region. Essential for efficient processing of 16S rRNA. May be needed both before and after RbfA during the maturation of 16S rRNA. It has affinity for free ribosomal 30S subunits but not for 70S ribosomes. The chain is Ribosome maturation factor RimM from Bifidobacterium longum (strain DJO10A).